A 698-amino-acid polypeptide reads, in one-letter code: MOXD1 homolog 1 (698 aa).

Residues 1-20 (MSVQDVLWIVLTVQLSFGLA) form the signal peptide. N-linked (GlcNAc...) asparagine glycans are attached at residues asparagine 36, asparagine 140, and asparagine 221. The region spanning 54–174 (GLYWLKWWIN…DTFKVLWSIG (121 aa)) is the DOMON domain. Residue tyrosine 232 is part of the active site. Cu cation is bound by residues histidine 265 and histidine 266. Cysteine 272 and cysteine 309 are oxidised to a cystine. Cu cation contacts are provided by histidine 347, histidine 425, and histidine 427. 2 cysteine pairs are disulfide-bonded: cysteine 403–cysteine 516 and cysteine 479–cysteine 501. Histidine 425 is an active-site residue. Residue asparagine 465 is glycosylated (N-linked (GlcNAc...) asparagine). Methionine 500 contributes to the Cu cation binding site. N-linked (GlcNAc...) asparagine glycans are attached at residues asparagine 538 and asparagine 561.

Belongs to the copper type II ascorbate-dependent monooxygenase family. Requires Cu(2+) as cofactor.

It is found in the secreted. The chain is MOXD1 homolog 1 from Drosophila melanogaster (Fruit fly).